The following is a 162-amino-acid chain: Interleukin-15 (162 aa).

A signal peptide spans 1 to 29 (MRISKPHLRITSIQCYVCLLLNTHFLTEA). The propeptide occupies 30-48 (GIRVFILGCISAGIPKTEA). Cystine bridges form between C83/C133 and C90/C136. N-linked (GlcNAc...) asparagine glycans are attached at residues N119, N127, and N143.

Belongs to the IL-15/IL-21 family.

It is found in the secreted. Its function is as follows. Cytokine that plays a major role in the development of inflammatory and protective immune responses to microbial invaders and parasites by modulating immune cells of both the innate and adaptive immune systems. Stimulates the proliferation of natural killer cells, T-cells and B-cells and promotes the secretion of several cytokines. In monocytes, induces the production of IL8 and monocyte chemotactic protein 1/CCL2, two chemokines that attract neutrophils and monocytes respectively to sites of infection. Unlike most cytokines, which are secreted in soluble form, IL15 is expressed in association with its high affinity IL15RA on the surface of IL15-producing cells and delivers signals to target cells that express IL2RB and IL2RG receptor subunits. Binding to its receptor triggers the phosphorylation of JAK1 and JAK3 and the recruitment and subsequent phosphorylation of signal transducer and activator of transcription-3/STAT3 and STAT5. In mast cells, induces the rapid tyrosine phosphorylation of STAT6 and thereby controls mast cell survival and release of cytokines such as IL4. The sequence is that of Interleukin-15 (IL15) from Marmota monax (Woodchuck).